Reading from the N-terminus, the 89-residue chain is Large ribosomal subunit protein L37-2 (89 aa).

Positions 19, 22, 34, and 37 each coordinate Zn(2+). The C4-type zinc-finger motif lies at 19-37; the sequence is CRRCGNSSYHLQKSKCSQC.

The protein belongs to the eukaryotic ribosomal protein eL37 family. The cofactor is Zn(2+).

Binds to the 23S rRNA. The polypeptide is Large ribosomal subunit protein L37-2 (Drosophila melanogaster (Fruit fly)).